The sequence spans 533 residues: E3 ubiquitin-protein ligase MGRN1 (533 aa).

A lipid anchor (N-myristoyl glycine) is attached at glycine 2. The RING-type zinc finger occupies 278-317; the sequence is ECVVCLSDLRDTLILPCRHLCLCTSCADTLRYQANNCPIC. The Required for TSG101-binding motif lies at 385–388; the sequence is PSAP. Tyrosine 390 carries the post-translational modification Phosphotyrosine. The interval 421–519 is disordered; it reads QKGKTQSKSP…QPVPPADIYL (99 aa). Over residues 423 to 439 the composition is skewed to polar residues; it reads GKTQSKSPDSTLRSPSS. Phosphoserine occurs at positions 429, 450, and 502. Acidic residues predominate over residues 443–454; sequence EEDEEKLSEDPE.

As to quaternary structure, interacts with MC1R and MC4R. Interacts with TSG101. Interacts with mislocalized cytosolically exposed PRNP; this interaction alters MGRN1 subcellular location and causes lysosomal enlargement. In terms of processing, autoubiquitinated in vitro.

The protein localises to the cytoplasm. The protein resides in the cytosol. It localises to the cell membrane. Its subcellular location is the early endosome. The enzyme catalyses S-ubiquitinyl-[E2 ubiquitin-conjugating enzyme]-L-cysteine + [acceptor protein]-L-lysine = [E2 ubiquitin-conjugating enzyme]-L-cysteine + N(6)-ubiquitinyl-[acceptor protein]-L-lysine.. It participates in protein modification; protein ubiquitination. Functionally, E3 ubiquitin-protein ligase. Mediates TSG101 monoubiquitination at multiple sites. Plays a role in the regulation of endosome-to-lysosome trafficking. Impairs MC1R- and MC4R-signaling by competing with GNAS-binding to MCRs and inhibiting agonist-induced cAMP production. Does not inhibit ADRB2-signaling. Does not promote MC1R ubiquitination. Also acts as a negative regulator of hedgehog signaling. This chain is E3 ubiquitin-protein ligase MGRN1 (Mgrn1), found in Rattus norvegicus (Rat).